The primary structure comprises 84 residues: RNA-binding protein Hfq (84 aa).

The Sm domain occupies 11–71 (DTFLNHVRKN…ISTIMPGHPV (61 aa)).

It belongs to the Hfq family. Homohexamer.

Functionally, RNA chaperone that binds small regulatory RNA (sRNAs) and mRNAs to facilitate mRNA translational regulation in response to envelope stress, environmental stress and changes in metabolite concentrations. Also binds with high specificity to tRNAs. The protein is RNA-binding protein Hfq of Methylobacterium nodulans (strain LMG 21967 / CNCM I-2342 / ORS 2060).